The chain runs to 391 residues: Ferrochelatase (391 aa).

Residues His196 and Glu281 each coordinate Fe cation.

The protein belongs to the ferrochelatase family.

The protein resides in the cytoplasm. The catalysed reaction is heme b + 2 H(+) = protoporphyrin IX + Fe(2+). Its pathway is porphyrin-containing compound metabolism; protoheme biosynthesis; protoheme from protoporphyrin-IX: step 1/1. Its function is as follows. Catalyzes the ferrous insertion into protoporphyrin IX. In Prochlorococcus marinus (strain AS9601), this protein is Ferrochelatase.